The sequence spans 301 residues: Small ribosomal subunit biogenesis GTPase RsgA (301 aa).

The CP-type G domain occupies 63–224; sequence INALVRPPIA…IADTPGFSSY (162 aa). GTP is bound by residues 112–115 and 167–175; these read SKAD and GQTGAGKST. Zn(2+) contacts are provided by Cys-248, Cys-253, His-255, and Cys-261.

This sequence belongs to the TRAFAC class YlqF/YawG GTPase family. RsgA subfamily. As to quaternary structure, monomer. Associates with 30S ribosomal subunit, binds 16S rRNA. It depends on Zn(2+) as a cofactor.

The protein resides in the cytoplasm. Its function is as follows. One of several proteins that assist in the late maturation steps of the functional core of the 30S ribosomal subunit. Helps release RbfA from mature subunits. May play a role in the assembly of ribosomal proteins into the subunit. Circularly permuted GTPase that catalyzes slow GTP hydrolysis, GTPase activity is stimulated by the 30S ribosomal subunit. This Leuconostoc citreum (strain KM20) protein is Small ribosomal subunit biogenesis GTPase RsgA.